The primary structure comprises 526 residues: Threonine synthase 1, chloroplastic (526 aa).

A chloroplast-targeting transit peptide spans Met-1–Thr-40. Residues Pro-142 to Gly-144, Ser-165 to Phe-167, Asn-172, Leu-173, Lys-181, and Asn-187 each bind S-adenosyl-L-methionine. Lys-203 bears the N6-(pyridoxal phosphate)lysine mark. Residues Gly-335–Asn-339 and Thr-472 contribute to the pyridoxal 5'-phosphate site.

The protein belongs to the threonine synthase family. Homodimer. It depends on pyridoxal 5'-phosphate as a cofactor.

The protein resides in the plastid. It is found in the chloroplast. The catalysed reaction is O-phospho-L-homoserine + H2O = L-threonine + phosphate. It participates in amino-acid biosynthesis; L-threonine biosynthesis; L-threonine from L-aspartate: step 5/5. Its activity is regulated as follows. Allosterically activated by S-adenosyl-L-methionine (SAM). Activated by S-adenosyl-L-ethionine, 5'-amino-5'-deoxyadenosine, sinefungin and 5'-deoxy-5-methylthioadenosine. Inhibited by AMP. Functionally, catalyzes the gamma-elimination of phosphate from L-phosphohomoserine and the beta-addition of water to produce L-threonine. The sequence is that of Threonine synthase 1, chloroplastic (TS1) from Arabidopsis thaliana (Mouse-ear cress).